Here is a 215-residue protein sequence, read N- to C-terminus: Probable phosphoglycerate mutase GpmB (215 aa).

Substrate contacts are provided by residues 8-15 (RHGETQWN), 21-22 (QG), arginine 58, lysine 60, 82-85 (ELDM), 104-105 (RR), and 151-152 (GI). Histidine 9 acts as the Tele-phosphohistidine intermediate in catalysis. Glutamate 82 serves as the catalytic Proton donor/acceptor.

The protein belongs to the phosphoglycerate mutase family. GpmB subfamily.

The catalysed reaction is (2R)-2-phosphoglycerate = (2R)-3-phosphoglycerate. It functions in the pathway carbohydrate degradation; glycolysis; pyruvate from D-glyceraldehyde 3-phosphate: step 3/5. The polypeptide is Probable phosphoglycerate mutase GpmB (Salmonella agona (strain SL483)).